The chain runs to 650 residues: MNNKSKRMSAAGLLIAIGIVYGDIGTSPLYVMKSIVKAMGGIGNVNREFIIGSISLVLWTVTLLTTLQTVIIALKATNHGEGGIFALYTLVRKRAKWLVLPALIGGAAILADGTLTPAVTVTTAIEGLKGLQLGGGVPVSSQSMVIAITVLILLVLFSIQKMGTSIIGKAFGPIMFVWFTFLGVIGLINMSGDWSILQAINPVYAIKLLFSPYNKAGIFILGSIFLATTGAEALYSDVGHVGKKNIIGSWPFVFVCLSLNYFGQGVWILNNPTYRPADGGVLNPFYEMIPSDFRLAAIILATIAAVIASQALITGSFTLVAEASGLKFLPRMKIDYPSTEKGQIYIPSINKGICVATIAIVLYFQTSAHMEAAYGLSITISMLMTTILLYEWLAMKKVNPVWNWIFLIFFGVLDIMFMISSLTKFTHGGYVSLFIAGAIGFIMYVWYYGNKIRDKREARNAYVRLDEYTDMLTNLSHDENYPTYATNLVYMANVKYNKFIKREILYSILDKRPKRAKAYWFVTVNVTNEPFTAEYAVNTYGTKNVINIQLYLGFKKQTSVNVYIRQIVHDLIADGTIEPQPQEYTTTPGRDVGDFSFVIVNDVISPQTQLIGYEKWLVEARVRLQNLSSNPASWFGLEYADTVIERVPLS.

12 consecutive transmembrane segments (helical) span residues 12-32 (GLLI…LYVM), 54-74 (ISLV…IIAL), 97-117 (WLVL…TLTP), 139-159 (VSSQ…LFSI), 170-190 (AFGP…LINM), 216-236 (AGIF…ALYS), 249-269 (SWPF…VWIL), 295-315 (LAAI…LITG), 344-364 (IYIP…VLYF), 375-395 (GLSI…WLAM), 400-420 (PVWN…FMIS), and 428-448 (GGYV…VWYY).

This sequence belongs to the HAK/KUP transporter (TC 2.A.72) family.

Its subcellular location is the cell membrane. It catalyses the reaction K(+)(in) + H(+)(in) = K(+)(out) + H(+)(out). Functionally, transport of potassium into the cell. Likely operates as a K(+):H(+) symporter. In Lactobacillus acidophilus (strain ATCC 700396 / NCK56 / N2 / NCFM), this protein is Probable potassium transport system protein Kup 1.